The chain runs to 76 residues: DNA-directed RNA polymerase subunit epsilon (76 aa).

It belongs to the RNA polymerase subunit epsilon family. In terms of assembly, RNAP is composed of a core of 2 alpha, a beta and a beta' subunit. The core is associated with a delta subunit, and at least one of epsilon or omega. When a sigma factor is associated with the core the holoenzyme is formed, which can initiate transcription.

It catalyses the reaction RNA(n) + a ribonucleoside 5'-triphosphate = RNA(n+1) + diphosphate. A non-essential component of RNA polymerase (RNAP). This is DNA-directed RNA polymerase subunit epsilon from Streptococcus agalactiae serotype Ia (strain ATCC 27591 / A909 / CDC SS700).